Here is a 951-residue protein sequence, read N- to C-terminus: UvrABC system protein A (951 aa).

Residue Gly-33–Ser-40 participates in ATP binding. The segment at Cys-252–Cys-279 adopts a C4-type zinc-finger fold. 2 ABC transporter domains span residues Trp-309–Leu-587 and Gly-607–Lys-935. Residue Gly-639 to Ser-646 participates in ATP binding. A C4-type zinc finger spans residues Cys-738–Cys-764.

The protein belongs to the ABC transporter superfamily. UvrA family. As to quaternary structure, forms a heterotetramer with UvrB during the search for lesions.

The protein resides in the cytoplasm. In terms of biological role, the UvrABC repair system catalyzes the recognition and processing of DNA lesions. UvrA is an ATPase and a DNA-binding protein. A damage recognition complex composed of 2 UvrA and 2 UvrB subunits scans DNA for abnormalities. When the presence of a lesion has been verified by UvrB, the UvrA molecules dissociate. This chain is UvrABC system protein A, found in Lactiplantibacillus plantarum (strain ATCC BAA-793 / NCIMB 8826 / WCFS1) (Lactobacillus plantarum).